The chain runs to 45 residues: Large ribosomal subunit protein bL34 (45 aa).

The protein belongs to the bacterial ribosomal protein bL34 family.

In Clavibacter michiganensis subsp. michiganensis (strain NCPPB 382), this protein is Large ribosomal subunit protein bL34.